A 215-amino-acid chain; its full sequence is 3-dehydroquinate dehydratase (215 aa).

Residues S6, 31-33 (ELR), and R64 each bind 3-dehydroquinate. Residue H111 is the Proton donor/acceptor of the active site. K138 acts as the Schiff-base intermediate with substrate in catalysis. Positions 174, 193, and 197 each coordinate 3-dehydroquinate.

Belongs to the type-I 3-dehydroquinase family. As to quaternary structure, homodimer.

The catalysed reaction is 3-dehydroquinate = 3-dehydroshikimate + H2O. The protein operates within metabolic intermediate biosynthesis; chorismate biosynthesis; chorismate from D-erythrose 4-phosphate and phosphoenolpyruvate: step 3/7. In terms of biological role, involved in the third step of the chorismate pathway, which leads to the biosynthesis of aromatic amino acids. Catalyzes the cis-dehydration of 3-dehydroquinate (DHQ) and introduces the first double bond of the aromatic ring to yield 3-dehydroshikimate. This Ignicoccus hospitalis (strain KIN4/I / DSM 18386 / JCM 14125) protein is 3-dehydroquinate dehydratase.